A 198-amino-acid polypeptide reads, in one-letter code: MLSLEDGTLAVKTARNVIEEYVKTGNYSKFELPKTFDRPGGVFVTLSINHDLRGCIGYPYPMEDMSLGEALADAAMSAATRDPRFPRVHKNELDQIRVEVTILGQPELLKCKPLERPHHIKIGRDGLIIEYGLHKGLLLPQVPVEWHWDATEFLENLCLKAGISPDAWVEEKAKIYTFGGQIFEETEPGGPVIEKKIA.

Positions 5–194 (EDGTLAVKTA…ETEPGGPVIE (190 aa)) constitute an AMMECR1 domain.

The chain is Protein UNCMA_24250 from Methanocella arvoryzae (strain DSM 22066 / NBRC 105507 / MRE50).